The primary structure comprises 440 residues: Chromosome partition protein MukF (440 aa).

Residues Leu208 to Ile236 are leucine-zipper.

This sequence belongs to the MukF family. As to quaternary structure, interacts, and probably forms a ternary complex, with MukE and MukB via its C-terminal region. The complex formation is stimulated by calcium or magnesium. It is required for an interaction between MukE and MukB.

Its subcellular location is the cytoplasm. It localises to the nucleoid. Functionally, involved in chromosome condensation, segregation and cell cycle progression. May participate in facilitating chromosome segregation by condensation DNA from both sides of a centrally located replisome during cell division. Not required for mini-F plasmid partitioning. Probably acts via its interaction with MukB and MukE. Overexpression results in anucleate cells. It has a calcium binding activity. This Shigella boydii serotype 18 (strain CDC 3083-94 / BS512) protein is Chromosome partition protein MukF.